The sequence spans 600 residues: Proline--tRNA ligase (600 aa).

Belongs to the class-II aminoacyl-tRNA synthetase family. ProS type 1 subfamily. Homodimer.

Its subcellular location is the cytoplasm. It catalyses the reaction tRNA(Pro) + L-proline + ATP = L-prolyl-tRNA(Pro) + AMP + diphosphate. In terms of biological role, catalyzes the attachment of proline to tRNA(Pro) in a two-step reaction: proline is first activated by ATP to form Pro-AMP and then transferred to the acceptor end of tRNA(Pro). As ProRS can inadvertently accommodate and process non-cognate amino acids such as alanine and cysteine, to avoid such errors it has two additional distinct editing activities against alanine. One activity is designated as 'pretransfer' editing and involves the tRNA(Pro)-independent hydrolysis of activated Ala-AMP. The other activity is designated 'posttransfer' editing and involves deacylation of mischarged Ala-tRNA(Pro). The misacylated Cys-tRNA(Pro) is not edited by ProRS. The chain is Proline--tRNA ligase from Prochlorococcus marinus (strain AS9601).